The chain runs to 450 residues: Crinkler effector protein 63 (450 aa).

A signal peptide spans 1–17; sequence MVKLFCAIVGAAGSAFP. The segment at 18–55 is LQLFLAK domain; that stretch reads VDIDAGQSAGDLKDAIKAKNPATITCDAKDLQLSLAKT. The interval 58 to 117 is DWL domain; sequence GAWLPDDDQAALDLEDGKVHEDIQALIDGEKMKATWTIEDVLTANNMTKRKGRAPKSRQI. N-linked (GlcNAc...) asparagine glycosylation occurs at Asn103. The short motif at 118 to 124 is the HVLVXXP motif element; sequence HVLVVVP. An effector domain region spans residues 125–450; that stretch reads EGAFGSASET…RSIPTFSYFS (326 aa). Positions 218–224 match the Nuclear localization signal (NLS) motif; sequence QRKRYRR. Asn342 carries an N-linked (GlcNAc...) asparagine glycan.

Belongs to the Crinkler effector family. Forms a homodimer via an inverted association manner. Forms heterodimers with CRN79 and CRN115.

It localises to the secreted. The protein resides in the host nucleus. The protein localises to the host nucleoplasm. Its function is as follows. Secreted effector that, with CRN115, is critical to pathogenesis by modulating host defenses. Induces cell death in plant host cells. Suppresses callose deposition and affects expression of defense-related genes including two salicylic acid (SA) signal-induced and antimicrobial PR genes (PR1 and PR2), and genes involved in jasmonic acid (JA)/ethylene (ET)-mediated defense pathway (ERF1, ORA59, PDF1.2). CRN115 and CRN63 may share the same molecular host targets that are involved in the cell death signal transduction pathway and that their differential activities are dependent on plant nuclear localization or not. Does not affect MAPK activation and BIK1 phosphorylation and acts downstream of the MAPK cascades in PTI signaling. This Phytophthora sojae (strain P6497) (Soybean stem and root rot agent) protein is Crinkler effector protein 63.